Here is a 397-residue protein sequence, read N- to C-terminus: Bifunctional enzyme IspD/IspF (397 aa).

The 2-C-methyl-D-erythritol 4-phosphate cytidylyltransferase stretch occupies residues 1–236 (MSIAAVILAA…QKKMQMFPDI (236 aa)). Positions 237-397 (RTGNGYDVHS…NVLYPGEIPK (161 aa)) are 2-C-methyl-D-erythritol 2,4-cyclodiphosphate synthase. Asp-243 and His-245 together coordinate a divalent metal cation. 4-CDP-2-C-methyl-D-erythritol 2-phosphate is bound by residues 243-245 (DVH) and 269-270 (HS). His-277 is an a divalent metal cation binding site. Residues 291–293 (DIG), 367–370 (TTNE), Phe-374, and Arg-377 contribute to the 4-CDP-2-C-methyl-D-erythritol 2-phosphate site.

The protein in the N-terminal section; belongs to the IspD/TarI cytidylyltransferase family. IspD subfamily. It in the C-terminal section; belongs to the IspF family. Requires a divalent metal cation as cofactor.

It carries out the reaction 2-C-methyl-D-erythritol 4-phosphate + CTP + H(+) = 4-CDP-2-C-methyl-D-erythritol + diphosphate. The catalysed reaction is 4-CDP-2-C-methyl-D-erythritol 2-phosphate = 2-C-methyl-D-erythritol 2,4-cyclic diphosphate + CMP. It participates in isoprenoid biosynthesis; isopentenyl diphosphate biosynthesis via DXP pathway; isopentenyl diphosphate from 1-deoxy-D-xylulose 5-phosphate: step 2/6. Its pathway is isoprenoid biosynthesis; isopentenyl diphosphate biosynthesis via DXP pathway; isopentenyl diphosphate from 1-deoxy-D-xylulose 5-phosphate: step 4/6. Its function is as follows. Bifunctional enzyme that catalyzes the formation of 4-diphosphocytidyl-2-C-methyl-D-erythritol from CTP and 2-C-methyl-D-erythritol 4-phosphate (MEP) (IspD), and catalyzes the conversion of 4-diphosphocytidyl-2-C-methyl-D-erythritol 2-phosphate (CDP-ME2P) to 2-C-methyl-D-erythritol 2,4-cyclodiphosphate (ME-CPP) with a corresponding release of cytidine 5-monophosphate (CMP) (IspF). This Bartonella henselae (strain ATCC 49882 / DSM 28221 / CCUG 30454 / Houston 1) (Rochalimaea henselae) protein is Bifunctional enzyme IspD/IspF.